Reading from the N-terminus, the 625-residue chain is Chaperone protein HtpG (625 aa).

Residues 1–341 form an a; substrate-binding region; it reads MGKRKFKAES…SEDLSLNISR (341 aa). Positions 342–551 are b; that stretch reads EMLQHDRQLK…DGEISLEMEK (210 aa). Positions 552–625 are c; the sequence is IINAMPDDQQ…FTNDICKVMV (74 aa).

This sequence belongs to the heat shock protein 90 family. As to quaternary structure, homodimer.

The protein localises to the cytoplasm. In terms of biological role, molecular chaperone. Has ATPase activity. The polypeptide is Chaperone protein HtpG (Oceanobacillus iheyensis (strain DSM 14371 / CIP 107618 / JCM 11309 / KCTC 3954 / HTE831)).